Here is a 330-residue protein sequence, read N- to C-terminus: ADP-L-glycero-D-manno-heptose-6-epimerase (330 aa).

NADP(+) is bound by residues 10–11 (FI), 31–32 (DD), Lys-38, Lys-53, 74–78 (QGACS), and Asn-91. Tyr-138 (proton acceptor) is an active-site residue. Lys-142 is an NADP(+) binding site. Asn-167 serves as a coordination point for substrate. Residues Val-168 and Lys-176 each coordinate NADP(+). The Proton acceptor role is filled by Lys-176. Substrate is bound by residues Arg-178, His-185, 199-202 (FAGW), Arg-212, and Tyr-291.

It belongs to the NAD(P)-dependent epimerase/dehydratase family. HldD subfamily. Homopentamer. The cofactor is NADP(+).

It catalyses the reaction ADP-D-glycero-beta-D-manno-heptose = ADP-L-glycero-beta-D-manno-heptose. Its pathway is nucleotide-sugar biosynthesis; ADP-L-glycero-beta-D-manno-heptose biosynthesis; ADP-L-glycero-beta-D-manno-heptose from D-glycero-beta-D-manno-heptose 7-phosphate: step 4/4. Catalyzes the interconversion between ADP-D-glycero-beta-D-manno-heptose and ADP-L-glycero-beta-D-manno-heptose via an epimerization at carbon 6 of the heptose. The protein is ADP-L-glycero-D-manno-heptose-6-epimerase of Bordetella petrii (strain ATCC BAA-461 / DSM 12804 / CCUG 43448).